A 521-amino-acid chain; its full sequence is Cytochrome P450 1A1 (521 aa).

Position 229 (Phe229) interacts with substrate. Heme is bound at residue Cys463.

It belongs to the cytochrome P450 family. Requires heme as cofactor.

The protein localises to the endoplasmic reticulum membrane. Its subcellular location is the microsome membrane. It carries out the reaction an organic molecule + reduced [NADPH--hemoprotein reductase] + O2 = an alcohol + oxidized [NADPH--hemoprotein reductase] + H2O + H(+). Cytochromes P450 are a group of heme-thiolate monooxygenases. They oxidize a variety of structurally unrelated compounds, including steroids, fatty acids, and xenobiotics. In Chelon auratus (Golden grey mullet), this protein is Cytochrome P450 1A1 (cyp1a1).